The sequence spans 363 residues: Carbamoyl phosphate synthase small chain (363 aa).

Positions 1–172 are CPSase; the sequence is MKAFLVLDNG…TKYIFGTHTG (172 aa). 3 residues coordinate L-glutamine: Ser45, Gly224, and Gly226. In terms of domain architecture, Glutamine amidotransferase type-1 spans 176 to 362; that stretch reads KLAVYDYGVK…YDLVETTKRG (187 aa). Residue Cys252 is the Nucleophile of the active site. Positions 253, 256, 294, 296, and 297 each coordinate L-glutamine. Active-site residues include His335 and Glu337.

This sequence belongs to the CarA family. Composed of two chains; the small (or glutamine) chain promotes the hydrolysis of glutamine to ammonia, which is used by the large (or ammonia) chain to synthesize carbamoyl phosphate. Tetramer of heterodimers (alpha,beta)4.

The enzyme catalyses hydrogencarbonate + L-glutamine + 2 ATP + H2O = carbamoyl phosphate + L-glutamate + 2 ADP + phosphate + 2 H(+). The catalysed reaction is L-glutamine + H2O = L-glutamate + NH4(+). Its pathway is amino-acid biosynthesis; L-arginine biosynthesis; carbamoyl phosphate from bicarbonate: step 1/1. It functions in the pathway pyrimidine metabolism; UMP biosynthesis via de novo pathway; (S)-dihydroorotate from bicarbonate: step 1/3. Its function is as follows. Small subunit of the glutamine-dependent carbamoyl phosphate synthetase (CPSase). CPSase catalyzes the formation of carbamoyl phosphate from the ammonia moiety of glutamine, carbonate, and phosphate donated by ATP, constituting the first step of 2 biosynthetic pathways, one leading to arginine and/or urea and the other to pyrimidine nucleotides. The small subunit (glutamine amidotransferase) binds and cleaves glutamine to supply the large subunit with the substrate ammonia. This is Carbamoyl phosphate synthase small chain from Leptospira borgpetersenii serovar Hardjo-bovis (strain L550).